Reading from the N-terminus, the 729-residue chain is Phosphoribosylformylglycinamidine synthase subunit PurL (729 aa).

Residue H42 is part of the active site. The ATP site is built by Y45 and K84. E86 is a binding site for Mg(2+). Substrate is bound by residues 87 to 90 and R109; that span reads SHNH. H88 functions as the Proton acceptor in the catalytic mechanism. D110 is a Mg(2+) binding site. Q238 lines the substrate pocket. Residue D266 coordinates Mg(2+). 310–312 serves as a coordination point for substrate; it reads ESQ. ATP is bound by residues D492 and G529. N530 serves as a coordination point for Mg(2+). Position 532 (S532) interacts with substrate.

It belongs to the FGAMS family. As to quaternary structure, monomer. Part of the FGAM synthase complex composed of 1 PurL, 1 PurQ and 2 PurS subunits.

The protein localises to the cytoplasm. The catalysed reaction is N(2)-formyl-N(1)-(5-phospho-beta-D-ribosyl)glycinamide + L-glutamine + ATP + H2O = 2-formamido-N(1)-(5-O-phospho-beta-D-ribosyl)acetamidine + L-glutamate + ADP + phosphate + H(+). It participates in purine metabolism; IMP biosynthesis via de novo pathway; 5-amino-1-(5-phospho-D-ribosyl)imidazole from N(2)-formyl-N(1)-(5-phospho-D-ribosyl)glycinamide: step 1/2. In terms of biological role, part of the phosphoribosylformylglycinamidine synthase complex involved in the purines biosynthetic pathway. Catalyzes the ATP-dependent conversion of formylglycinamide ribonucleotide (FGAR) and glutamine to yield formylglycinamidine ribonucleotide (FGAM) and glutamate. The FGAM synthase complex is composed of three subunits. PurQ produces an ammonia molecule by converting glutamine to glutamate. PurL transfers the ammonia molecule to FGAR to form FGAM in an ATP-dependent manner. PurS interacts with PurQ and PurL and is thought to assist in the transfer of the ammonia molecule from PurQ to PurL. In Campylobacter curvus (strain 525.92), this protein is Phosphoribosylformylglycinamidine synthase subunit PurL.